Reading from the N-terminus, the 1199-residue chain is MVLAVAMSQDADPSGPEQPDRDACVMPGVQGPSVPQGQQGMQPLPPPPPPQPQASLPQIIQNAAKLLDKSPFSVNNQNPLLTSPASVQLAQIQAQLTLHRLKMAQTAVTNNTAAATVLNQVLSKVAMSQPLFNQLRHPSVLGTAHGPTGVSQHAASVPSAHFPSTAIAFSPPSQTGGPGPSVSLPSQPPNAMVVHTFSGVVPQTPAQPAVILSLGKAGPTPATTGFYDYGKANSGQAYGSETEGQPGFLPASASATASGSMTYEGHYSHTGQDGQPAFSKDFYGPNAQGPHIAGGFPADQTGSMKGDVGGLLQGTNSQWERPPGFSGQNKPDITAGPSLWAPPASQPYELYDPEEPTSDRAPPAFGSRLNNSKQGFGCSCRRTKEGQAVLSVRPLQGHQLNDFRGLAPLHLPHICSICDKKVFDLKDWELHVKGKLHAQKCLLFSESAGLRSIRASGEGTLSASANSTAVYNPTGNEDYTSNLGTSYAAIPTRAFAQSNPVFPSASSGTSFAAQRKGAGRVVHICNLPEGSCTENDVINLGLPFGKVTNYILMKSTNQAFLEMAYTEAAQAMVQYYQEKPAIINGEKLLIRMSTRYKELQLKKPGKNVAAIIQDIHSQRERDMLREADRYGPERPRSRSPMSRSLSPRSHSPPGPSRADWGNGRDSYAWRDEDRETVPRRENGEDKRDRLDVWAHDRKHYPRQLDKAELDERLEGGRGYREKYLKSGSPGPLHSVSGYKGREDGYHRKEPKAKLDKYPKQQPDVPGRSRRKEEARLREPRHPHPEDSGKAEDLEPKITRAPDGTKSKQSEKSKTKRADRDQEGADDKKESQLAENEAGAEEQEGMVGIQQEGTESCDPENTRTKKGQDCDSGSEPEGDNWYPTNMEELVTVDEVGEEDFIMEPDLPELEEIVPIDQKDKTLPKICTCVTATLGLDLAKDFTKQGETLGNGDAELSLKLPGQVPSTSASCPNDTDLEMPGLNLDAERKPAESETGLSLEVSNCYEKEARGEEDSDVSLAPAVQQMSSPQPADERARQSSPFLDDCKARGSPEDGSHEASPLEGKASPPTESDLQSQACRENPRYMEVKSLNVRSPEFTEAELKEPLSLPSWEPEVFSELSIPLGVEFVVPRTGFYCKLCGLFYTSEEAAKVSHCRSTVHYRNLQKYLSQLAEEGLKETEGTDSPSPERGGIGPHLERKKL.

Disordered regions lie at residues 1 to 55 (MVLA…PQAS), 163 to 186 (PSTA…SLPS), and 320 to 346 (ERPP…PASQ). The segment covering 25-42 (VMPGVQGPSVPQGQQGMQ) has biased composition (low complexity). The segment covering 43–52 (PLPPPPPPQP) has biased composition (pro residues). A compositionally biased stretch (low complexity) spans 170–183 (SPPSQTGGPGPSVS). A U1-type zinc finger spans residues 410 to 444 (HLPHICSICDKKVFDLKDWELHVKGKLHAQKCLLF). Positions 520–595 (RVVHICNLPE…EKLLIRMSTR (76 aa)) constitute an RRM domain. Positions 626–636 (EADRYGPERPR) are enriched in basic and acidic residues. 3 disordered regions span residues 626–685 (EADR…NGED), 720–884 (REKY…YPTN), and 944–1077 (GETL…SQAC). The interval 630 to 649 (YGPERPRSRSPMSRSLSPRS) is RS. 5 positions are modified to phosphoserine: serine 637, serine 639, serine 642, serine 644, and serine 651. Positions 638 to 649 (RSPMSRSLSPRS) are enriched in low complexity. A compositionally biased stretch (basic and acidic residues) spans 667–685 (YAWRDEDRETVPRRENGED). Serine 728 is modified (phosphoserine). Composition is skewed to basic and acidic residues over residues 739–758 (KGRE…DKYP), 770–831 (RKEE…KESQ), and 859–868 (ENTRTKKGQD). Serine 787 bears the Phosphoserine mark. Serine 871, serine 873, and serine 955 each carry phosphoserine. The segment covering 962 to 971 (VPSTSASCPN) has biased composition (polar residues). A phosphoserine mark is found at serine 991, serine 1026, serine 1038, serine 1049, serine 1054, serine 1058, serine 1070, serine 1088, and serine 1093. A compositionally biased stretch (basic and acidic residues) spans 1042–1055 (DDCKARGSPEDGSH). A compositionally biased stretch (polar residues) spans 1067–1077 (PTESDLQSQAC). The Matrin-type zinc-finger motif lies at 1133-1164 (FYCKLCGLFYTSEEAAKVSHCRSTVHYRNLQK). Residues 1172 to 1199 (EGLKETEGTDSPSPERGGIGPHLERKKL) are disordered. 2 positions are modified to phosphoserine: serine 1182 and serine 1184.

In terms of assembly, associates with components of the U1 and U2 U1 small nuclear ribonucleoprotein complexes. Phosphorylation regulates the subcellular localization. Phosphorylation of Ser-637 and Ser-639 in the RS (arginine/serine-rich) region promotes nuclear localization of the protein. In contrast, phosphorylation of the C-terminal disordered region promotes localization to cytoplasmic ribonucleoprotein granules. In terms of tissue distribution, predominantly expressed in striated muscle, with highest expression in the heart. In differentiating myoblasts, expression correlates with sarcomere assembly: expression peaks when alpha-actinin is localized mainly in mature Z bodies within the nascent myofiber and expression declines as the sarcomeres continue to mature. Also expressed in kidney.

It is found in the nucleus. Its subcellular location is the cytoplasm. The protein localises to the cytoplasmic ribonucleoprotein granule. Its function is as follows. RNA-binding protein that acts as a regulator of mRNA splicing of a subset of genes encoding key structural proteins involved in cardiac development, such as TTN (Titin), CACNA1C, CAMK2D or PDLIM5/ENH. Acts as a repressor of mRNA splicing: specifically binds the 5'UCUU-3' motif that is predominantly found within intronic sequences of pre-mRNAs, leading to the exclusion of specific exons in target transcripts. RBM20-mediated exon skipping is hormone-dependent and is essential for TTN isoform transition in both cardiac and skeletal muscles. RBM20-mediated exon skipping of TTN provides substrates for the formation of circular RNA (circRNAs) from the TTN transcripts. Together with RBM24, promotes the expression of short isoforms of PDLIM5/ENH in cardiomyocytes. This is RNA-binding protein 20 from Mus musculus (Mouse).